Here is a 776-residue protein sequence, read N- to C-terminus: G protein-regulated inducer of neurite outgrowth 3 (776 aa).

2 disordered regions span residues 1-37 and 68-312; these read MGTV…RHRP and VCEH…IKEV. Positions 101–118 are enriched in low complexity; the sequence is QLPGSSQPAASAPSSAAG. Composition is skewed to polar residues over residues 129 to 161 and 193 to 203; these read PANQ…SQRT and ETIQGTVQTPV. Residues 208–217 are compositionally biased toward low complexity; the sequence is VVSHSSSPVG. Residues 242–274 show a composition bias toward polar residues; the sequence is SGCSENKQPSVTASGPQGTTSVTPQPTPLTSEP. 2 positions are modified to phosphoserine: serine 332 and serine 365. 2 disordered regions span residues 518–637 and 723–748; these read ISKA…RPSR and LIKT…LRGR. Positions 520–552 are enriched in basic and acidic residues; sequence KADHSGSLDPTNKGDAREKKPASPQVVKEKEST. Positions 566 to 580 are enriched in polar residues; it reads PKSQESGGTESAANP. Residues 604 to 620 show a composition bias toward low complexity; sequence SLSLPSDPMGDSSPGSG. Positions 725–742 are enriched in polar residues; that stretch reads KTQNSQTRRSISSDTSSN.

Functionally, may be involved in neurite outgrowth. This chain is G protein-regulated inducer of neurite outgrowth 3 (GPRIN3), found in Homo sapiens (Human).